The primary structure comprises 154 residues: Ubiquitin-conjugating enzyme E2 L5 (154 aa).

A UBC core domain is found at 2–149 (AASRRLMKEL…AEEFTKKYGE (148 aa)). Catalysis depends on C86, which acts as the Glycyl thioester intermediate.

The protein belongs to the ubiquitin-conjugating enzyme family.

It carries out the reaction S-ubiquitinyl-[E1 ubiquitin-activating enzyme]-L-cysteine + [E2 ubiquitin-conjugating enzyme]-L-cysteine = [E1 ubiquitin-activating enzyme]-L-cysteine + S-ubiquitinyl-[E2 ubiquitin-conjugating enzyme]-L-cysteine.. It functions in the pathway protein modification; protein ubiquitination. Functionally, catalyzes the covalent attachment of ubiquitin to other proteins. This is Ubiquitin-conjugating enzyme E2 L5 from Homo sapiens (Human).